A 555-amino-acid polypeptide reads, in one-letter code: Hydroxylamine reductase (555 aa).

Residues C5, C8, C17, and C23 each contribute to the [4Fe-4S] cluster site. H248, E272, C316, C408, C436, C461, E496, and K498 together coordinate hybrid [4Fe-2O-2S] cluster. Cysteine persulfide is present on C408.

The protein belongs to the HCP family. [4Fe-4S] cluster is required as a cofactor. The cofactor is hybrid [4Fe-2O-2S] cluster.

The protein resides in the cytoplasm. It catalyses the reaction A + NH4(+) + H2O = hydroxylamine + AH2 + H(+). In terms of biological role, catalyzes the reduction of hydroxylamine to form NH(3) and H(2)O. The protein is Hydroxylamine reductase of Natranaerobius thermophilus (strain ATCC BAA-1301 / DSM 18059 / JW/NM-WN-LF).